The chain runs to 550 residues: MEEGAKIGREHEQQQQQHGRVNGSGRVAAVGGGSGGGGDEIEIEVAAAAGASPSRQHGGLHGDVQAPTWKRFLAHVGPGFVISIAYLDPSNLQTDLVAGSSHRYSLLWVLLFGFIFVLTVQSLAANLGIITGRHLAELCMGEYPKYVKYCLWLLAELGVIAATIPGVLGTALAYNMLLHIPFWAGVLACGACTFLILGLQGYGARKMEFTISVLMLVMATCFFMELGKVNPPAGGVIEGLFIPRPKGDYSTSDAVAMFGSLVVPHNLFLHSSLVLTRKMPYTSKGRKDASTFFLLENALALFIALLVNVAIVSISGTICANNLSFADTSTCSSLTLNSTYVLLKNILGKSSSTVYGVALLVSGQSCMVATSYAGQYIMQGFSGMRKCIIYLVAPCFTLLPSLIICSIGGTLRVHRIINIAAIVLSFVLPFALIPLIKFSSSCTNIGPYKNATSIIRIAWILSLVIIGINIYFFCTSFVAWLVHSDLPRVVNAIISSLVFPFMAAYIAALIYLAFRKVNLSDPFPTNSVSGEIEVQHIQIQEKQEDLGVHL.

Over residues 1–13 (MEEGAKIGREHEQ) the composition is skewed to basic and acidic residues. The tract at residues 1–37 (MEEGAKIGREHEQQQQQHGRVNGSGRVAAVGGGSGGG) is disordered. Positions 14-29 (QQQQHGRVNGSGRVAA) are enriched in low complexity. Helical transmembrane passes span 72–92 (FLAH…PSNL), 105–125 (SLLW…SLAA), 151–171 (LWLL…LGTA), 177–197 (LLHI…FLIL), 207–227 (MEFT…MELG), 255–275 (VAMF…SLVL), 292–312 (FFLL…VAIV), 354–374 (VYGV…SYAG), 388–408 (IIYL…CSIG), 416–436 (IINI…IPLI), 457–477 (IAWI…CTSF), and 492–512 (AIIS…LIYL).

This sequence belongs to the NRAMP (TC 2.A.55) family.

The protein localises to the membrane. Probable metal transporter. The sequence is that of Metal transporter Nramp4 (NRAMP4) from Oryza sativa subsp. japonica (Rice).